The chain runs to 446 residues: Phosphoglucosamine mutase (446 aa).

Serine 103 functions as the Phosphoserine intermediate in the catalytic mechanism. Mg(2+)-binding residues include serine 103, aspartate 242, aspartate 244, and aspartate 246. A Phosphoserine modification is found at serine 103.

The protein belongs to the phosphohexose mutase family. Mg(2+) is required as a cofactor. In terms of processing, activated by phosphorylation.

It carries out the reaction alpha-D-glucosamine 1-phosphate = D-glucosamine 6-phosphate. Catalyzes the conversion of glucosamine-6-phosphate to glucosamine-1-phosphate. The chain is Phosphoglucosamine mutase from Vibrio campbellii (strain ATCC BAA-1116).